The sequence spans 288 residues: MTDNTDNDKLYRYLFQDRAVRGEWVRLNQTFTDTLNTHQYPKVIQNLLGEMMVATSLLTATLKFEGDITVQVQGDGPLKLALVNGNHQQQIRALARLQADVSDDMSLAQLVGKGVLVITIAPTEGERYQGVIALDKPTITACLEDYFVRSEQLQTQLIIRAGEFEGQPVAAGMLLQIMPDGSGSPEDFEHLATLAATVKEEELFGLTAEELLYRLYHEERVEIFPSQPISFFCGCSQERSGAALLLISDEELDEVLAEHNGTIDMQCECCGTHYFFNKAAIMQLKVEK.

2 disulfides stabilise this stretch: cysteine 233/cysteine 235 and cysteine 267/cysteine 270.

This sequence belongs to the HSP33 family. Post-translationally, under oxidizing conditions two disulfide bonds are formed involving the reactive cysteines. Under reducing conditions zinc is bound to the reactive cysteines and the protein is inactive.

It localises to the cytoplasm. Redox regulated molecular chaperone. Protects both thermally unfolding and oxidatively damaged proteins from irreversible aggregation. Plays an important role in the bacterial defense system toward oxidative stress. The chain is 33 kDa chaperonin from Pasteurella multocida (strain Pm70).